We begin with the raw amino-acid sequence, 259 residues long: Probable metal transport system ATP-binding protein TC_0339 (259 aa).

The region spanning Trp-9–Leu-241 is the ABC transporter domain. Residue Gly-41 to Ser-48 participates in ATP binding.

Belongs to the ABC transporter superfamily.

It localises to the cell inner membrane. Functionally, part of an ATP-driven transport system TC_0338/TC_0339/TC_0341/TC_0342 for a metal. Probably responsible for energy coupling to the transport system. The sequence is that of Probable metal transport system ATP-binding protein TC_0339 from Chlamydia muridarum (strain MoPn / Nigg).